A 412-amino-acid polypeptide reads, in one-letter code: Esterase EstD (412 aa).

The signal sequence occupies residues 1 to 20; it reads MRLTVFLSLFLGVMVFGAFD. Residue Ser-243 is the Nucleophile of the active site. Residues Asp-347 and His-378 each act as charge relay system in the active site.

Belongs to the AB hydrolase superfamily. Esterase 10 family. In terms of assembly, exists mainly as a monomer and, to some extent as a dimer.

The catalysed reaction is a carboxylic ester + H2O = an alcohol + a carboxylate + H(+). With respect to regulation, is strongly inhibited by phenylmethylsulfonyl fluoride, a serine protease inhibitor, and by mercury chloride. Diethyl pyrocarbonate, a histidine modifier, also inhibits the reaction, albeit less pronounced than phenylmethylsulfonyl fluoride. EDTA and dithiothreitol have no effect on enzyme activity. In terms of biological role, exhibits significant esterase activity with a preference for short acyl chain esters (C4-C8) in vitro. Its physiological function is not known. Displays neither proteolytic activity using casein as substrate, nor peptidase activity when assayed with L-leucine p-nitroanilide and L-proline p-nitroanilide. In Thermotoga maritima (strain ATCC 43589 / DSM 3109 / JCM 10099 / NBRC 100826 / MSB8), this protein is Esterase EstD.